We begin with the raw amino-acid sequence, 244 residues long: tRNA1(Val) (adenine(37)-N6)-methyltransferase (244 aa).

This sequence belongs to the methyltransferase superfamily. tRNA (adenine-N(6)-)-methyltransferase family.

The protein resides in the cytoplasm. The catalysed reaction is adenosine(37) in tRNA1(Val) + S-adenosyl-L-methionine = N(6)-methyladenosine(37) in tRNA1(Val) + S-adenosyl-L-homocysteine + H(+). Specifically methylates the adenine in position 37 of tRNA(1)(Val) (anticodon cmo5UAC). In Photorhabdus laumondii subsp. laumondii (strain DSM 15139 / CIP 105565 / TT01) (Photorhabdus luminescens subsp. laumondii), this protein is tRNA1(Val) (adenine(37)-N6)-methyltransferase.